The chain runs to 631 residues: DNA ligase (631 aa).

NAD(+) contacts are provided by residues 37-41 and 79-80; these read DAHYD and ST. Lys115 (N6-AMP-lysine intermediate) is an active-site residue. Residues Arg131, Glu160, and Lys272 each contribute to the NAD(+) site. Zn(2+)-binding residues include Cys361, Cys364, Cys377, and Cys382. Residues 539 to 630 enclose the BRCT domain; it reads DVSSPISGKG…SQSSPEQMSL (92 aa).

Belongs to the NAD-dependent DNA ligase family. LigA subfamily. Mg(2+) serves as cofactor. Requires Mn(2+) as cofactor.

The enzyme catalyses NAD(+) + (deoxyribonucleotide)n-3'-hydroxyl + 5'-phospho-(deoxyribonucleotide)m = (deoxyribonucleotide)n+m + AMP + beta-nicotinamide D-nucleotide.. In terms of biological role, DNA ligase that catalyzes the formation of phosphodiester linkages between 5'-phosphoryl and 3'-hydroxyl groups in double-stranded DNA using NAD as a coenzyme and as the energy source for the reaction. It is essential for DNA replication and repair of damaged DNA. In Desulfatibacillum aliphaticivorans, this protein is DNA ligase.